We begin with the raw amino-acid sequence, 182 residues long: Transcription termination/antitermination protein NusG (182 aa).

The protein belongs to the NusG family.

Participates in transcription elongation, termination and antitermination. This Chlamydia muridarum (strain MoPn / Nigg) protein is Transcription termination/antitermination protein NusG.